We begin with the raw amino-acid sequence, 180 residues long: Large ribosomal subunit protein uL5 (180 aa).

This sequence belongs to the universal ribosomal protein uL5 family. As to quaternary structure, part of the 50S ribosomal subunit; part of the 5S rRNA/L5/L18/L25 subcomplex. Contacts the 5S rRNA and the P site tRNA. Forms a bridge to the 30S subunit in the 70S ribosome.

This is one of the proteins that bind and probably mediate the attachment of the 5S RNA into the large ribosomal subunit, where it forms part of the central protuberance. In the 70S ribosome it contacts protein S13 of the 30S subunit (bridge B1b), connecting the 2 subunits; this bridge is implicated in subunit movement. Contacts the P site tRNA; the 5S rRNA and some of its associated proteins might help stabilize positioning of ribosome-bound tRNAs. This chain is Large ribosomal subunit protein uL5, found in Leuconostoc mesenteroides subsp. mesenteroides (strain ATCC 8293 / DSM 20343 / BCRC 11652 / CCM 1803 / JCM 6124 / NCDO 523 / NBRC 100496 / NCIMB 8023 / NCTC 12954 / NRRL B-1118 / 37Y).